The following is an 89-amino-acid chain: uncharacterized protein (89 aa).

An HTH arsR-type domain is found at 1–89 (MEKYEKAAEI…KEIIKLVDEL (89 aa)).

This is an uncharacterized protein from Methanocaldococcus jannaschii (strain ATCC 43067 / DSM 2661 / JAL-1 / JCM 10045 / NBRC 100440) (Methanococcus jannaschii).